A 660-amino-acid polypeptide reads, in one-letter code: Galactocerebrosidase (660 aa).

A signal peptide spans 1–18 (MQTHNFLCIISVILGCSA). Residues Thr87 and Trp129 each coordinate substrate. The N-linked (GlcNAc...) asparagine glycan is linked to Asn147. Asn175 serves as a coordination point for substrate. Residue Glu176 is the Proton donor/acceptor of the active site. The active-site Nucleophile is Glu251. Cys264 and Cys371 are joined by a disulfide. N-linked (GlcNAc...) asparagine glycans are attached at residues Asn293 and Asn356. Residue Arg373 coordinates substrate. N-linked (GlcNAc...) asparagine glycosylation is found at Asn413, Asn465, Asn495, Asn499, Asn537, and Asn578.

Belongs to the glycosyl hydrolase 59 family.

The protein resides in the lysosome. It catalyses the reaction a beta-D-galactosyl-(1&lt;-&gt;1')-N-acylsphing-4-enine + H2O = an N-acylsphing-4-enine + D-galactose. The catalysed reaction is beta-D-galactosyl-(1&lt;-&gt;1)-sphing-4-enine + H2O = sphing-4-enine + D-galactose. The enzyme catalyses a D-galactosylceramide + H2O = an N-acyl-sphingoid base + D-galactose. In terms of biological role, hydrolyzes the galactose ester bonds of glycolipids such as galactosylceramide and galactosylsphingosine. This Danio rerio (Zebrafish) protein is Galactocerebrosidase.